A 243-amino-acid polypeptide reads, in one-letter code: Phosphate-specific transport system accessory protein PhoU (243 aa).

Belongs to the PhoU family. In terms of assembly, homodimer.

It is found in the cytoplasm. Functionally, part of the phosphate (Pho) regulon, which plays a key role in phosphate homeostasis. Encoded together with proteins of the phosphate-specific transport (Pst) system in the polycistronic pstSCAB-phoU operon. PhoU is essential for the repression of the Pho regulon at high phosphate conditions. In this role, it may bind, possibly as a chaperone, to PhoR, PhoB or a PhoR-PhoB complex to promote dephosphorylation of phospho-PhoB, or inhibit formation of the PhoR-PhoB transitory complex. The protein is Phosphate-specific transport system accessory protein PhoU of Serratia marcescens.